The primary structure comprises 468 residues: MYARNPPLNGSQSAQAPDWTPADADTGLQESMWRLGLGSDSYPERPGAPDCAYYMRTGVCGYGNRCRYNHPRDRASVEATVRATGQYPERFGEPPCQFYLKTGTCKFGASCKFHHPKNAGGSMSHVPLNIYGYPVREGDNECSYYLKTGQCKFGITCKFHHPQPAGTTVPPPPASAPQFYPSVQSLMPDQYGGPSSSLRVARTLLPGSYMQGAYGPMLLTPGVVPIPGWSPYSAPVSPALSPGAQHAVGATSLYGVTQLTSTTPSLPGVYPSLSSPTGVIQKEQAFPERPGEPECQYYLKTGDCKFGTSCKFHHPRDRVPPRANCVLSPIGLPLRPGVQRCTFYVQNGFCKFGSTCKFDHPMGTIRYNPSASSLADAPVAPYPVSSLLGALAAAPSSSSTELIAGGAKDAYMTGVPTSRSTSNISAGLIFSQSGGSIPFSELQLSSQSSLPLTGSRITRQGREIRRSF.

Residues 1-25 form a disordered region; sequence MYARNPPLNGSQSAQAPDWTPADAD. 5 consecutive C3H1-type zinc fingers follow at residues 45-73, 90-118, 136-164, 289-317, and 335-363; these read RPGA…HPRD, RFGE…HPKN, REGD…HPQP, RPGE…HPRD, and RPGV…HPMG.

The protein localises to the nucleus. This is Zinc finger CCCH domain-containing protein 32 from Arabidopsis thaliana (Mouse-ear cress).